The chain runs to 146 residues: Putative pre-16S rRNA nuclease (146 aa).

It belongs to the YqgF nuclease family.

The protein localises to the cytoplasm. Functionally, could be a nuclease involved in processing of the 5'-end of pre-16S rRNA. This chain is Putative pre-16S rRNA nuclease, found in Burkholderia thailandensis (strain ATCC 700388 / DSM 13276 / CCUG 48851 / CIP 106301 / E264).